A 397-amino-acid polypeptide reads, in one-letter code: P2X purinoceptor 3 (397 aa).

The Cytoplasmic segment spans residues 1–20 (MNCISDFFTYETTKSVVVKS). The helical transmembrane segment at 21–43 (WTIGIINRAVQLLIISYFVGWVF) threads the bilayer. At 44 to 322 (LHEKAYQVRD…AGKFNIIPTI (279 aa)) the chain is on the extracellular side. K63 and K65 together coordinate ATP. 3 disulfide bridges follow: C107–C153, C116–C137, and C122–C147. E111 provides a ligand contact to Mg(2+). N139 is a glycosylation site (N-linked (GlcNAc...) asparagine). Position 158 (D158) interacts with Mg(2+). Residue D158 participates in Ca(2+) binding. N-linked (GlcNAc...) asparagine glycosylation is present at N170. T172 serves as a coordination point for ATP. The N-linked (GlcNAc...) asparagine glycan is linked to N194. Intrachain disulfides connect C203–C213 and C247–C256. ATP-binding residues include S275, N279, and R281. N-linked (GlcNAc...) asparagine glycosylation occurs at N290. K299 is an ATP binding site. The chain crosses the membrane as a helical span at residues 323–341 (ISSVAAFTSVGVGTVLCDI). Topologically, residues 342–397 (ILLNFLKGADHYKARKFEEVTETTLKGTASTNPVFASDQATVEKQSTDSGAYSIGH) are cytoplasmic.

It belongs to the P2X receptor family. As to quaternary structure, homotrimer. Forms heterotrimer with P2RX2. Heterotrimeric P2RX2/3 has a ligand dose-response profile that is distinct from either homotrimeric P2RX2 or P2RX3. As to expression, selectively expressed in sensory ganglia.

It localises to the cell membrane. The enzyme catalyses Ca(2+)(in) = Ca(2+)(out). It catalyses the reaction Na(+)(in) = Na(+)(out). Its activity is regulated as follows. Has high sensitivity to ATP. Fast activation by external ATP. Exhibits rapid desensitization. Sensitives to the ATP agonist:alpha/beta-methylene-ATP. Subject to allosteric inhibition by AF-219. Mg(2+) and Ca(2+) slow deactivation of P2RX3. Its function is as follows. Extracellular ATP-activated non-selective cation channel. Plays particularly important role in sensory neurons where its activation is critical for gustatory, nociceptive responses, visceral reflexes and sensory hypersensitization. This is P2X purinoceptor 3 (P2rx3) from Rattus norvegicus (Rat).